Reading from the N-terminus, the 237-residue chain is Carboxy-S-adenosyl-L-methionine synthase (237 aa).

Residues Tyr40, 65–67 (GCS), 116–117 (DI), Asn131, and Arg194 contribute to the S-adenosyl-L-methionine site.

This sequence belongs to the class I-like SAM-binding methyltransferase superfamily. Cx-SAM synthase family. In terms of assembly, homodimer.

It catalyses the reaction prephenate + S-adenosyl-L-methionine = carboxy-S-adenosyl-L-methionine + 3-phenylpyruvate + H2O. In terms of biological role, catalyzes the conversion of S-adenosyl-L-methionine (SAM) to carboxy-S-adenosyl-L-methionine (Cx-SAM). The protein is Carboxy-S-adenosyl-L-methionine synthase of Dichelobacter nodosus (strain VCS1703A).